Consider the following 304-residue polypeptide: Thyroxine 5-deiodinase (304 aa).

A disordered region spans residues 1–22 (MPRQAASRLVVGEGEGPPGASG). At 1–44 (MPRQAASRLVVGEGEGPPGASGPAATMLRSLLLHSLRLCAQTAS) the chain is on the cytoplasmic side. Residues 45 to 67 (CLVLFPRFLGTAFMLWLLDFLCI) traverse the membrane as a helical; Signal-anchor for type II membrane protein segment. At 68–304 (RKHFLRRRHP…QLHGTRPHRF (237 aa)) the chain is on the extracellular side. Sec-170 is a catalytic residue. Residue Sec-170 is a non-standard amino acid, selenocysteine.

It belongs to the iodothyronine deiodinase family. Monomer. Homodimer. May undergo minor heretodimerization with DIO1 and DIO2.

The protein resides in the cell membrane. Its subcellular location is the endosome membrane. The enzyme catalyses 3,3',5'-triiodo-L-thyronine + iodide + A + H(+) = L-thyroxine + AH2. It catalyses the reaction 3,3'-diiodo-L-thyronine + iodide + A + H(+) = 3,3',5-triiodo-L-thyronine + AH2. The catalysed reaction is 3-iodo-L-thyronine + iodide + A + H(+) = 3,5-diiodo-L-thyronine + AH2. It carries out the reaction L-thyronine + iodide + A + H(+) = 3-iodo-L-thyronine + AH2. The enzyme catalyses 3',5'-diiodo-L-thyronine + iodide + A + H(+) = 3,3',5'-triiodo-L-thyronine + AH2. It catalyses the reaction 3'-iodo-L-thyronine + iodide + A + H(+) = 3,3'-diiodo-L-thyronine + AH2. The catalysed reaction is 3,3',5'-triiodothyronamine + iodide + A + H(+) = 3,3',5,5'-tetraiodothyronamine + AH2. It carries out the reaction 3',5'-diiodothyronamine + iodide + A + H(+) = 3,3',5'-triiodothyronamine + AH2. The enzyme catalyses 3,3'-diiodothyronamine + iodide + A + H(+) = 3,3',5-triiodothyronamine + AH2. It catalyses the reaction 3-iodothyronamine + iodide + A + H(+) = 3,5-diiodothyronamine + AH2. The catalysed reaction is 3'-iodothyronamine + iodide + A + H(+) = 3,3'-diiodothyronamine + AH2. It carries out the reaction thyronamine + iodide + A + H(+) = 3-iodothyronamine + AH2. Plays a crucial role in the metabolism of thyroid hormones (TH) and has specific roles in TH activation and inactivation by deiodination. Catalyzes the deiodination of L-thyroxine (T4) to 3,3',5'-triiodothyronine (rT3), 3,5,3'-triiodothyronine (T3) to 3,3'-diiodothyronine (3,3'-T2), 3,5-diiodothyronine (3,5-T2) to 3-monoiodothyronine (3-T1), rT3 to 3',5'-diiodothyronine (3',5'-T2) and 3,3'-T2 to 3'-monoiodothyronine (3'-T1) via inner-ring deiodination (IRD). Catalyzes the deiodination of 3-T1 to L-thyronine (T0) via outer-ring deiodination (ORD). Catalyzes the tyrosyl ring deiodinations of 3,3',5,5'-tetraiodothyronamine, 3,3',5'-triiodothyronamine, 3,5,3'-triiodothyronamine, 3,5-diiodothyronamine, 3,3'-diiodothyronamine and 3-iodothyronamine. This Mus musculus (Mouse) protein is Thyroxine 5-deiodinase (Dio3).